The chain runs to 214 residues: Octanoyltransferase (214 aa).

Positions 35 to 211 constitute a BPL/LPL catalytic domain; that stretch reads KSNIDFIWLG…IIQEEFYFNF (177 aa). Substrate is bound by residues 75–82, 142–144, and 155–157; these read RGGEVTCH, SIG, and GFS. Residue Cys173 is the Acyl-thioester intermediate of the active site.

This sequence belongs to the LipB family.

The protein resides in the cytoplasm. The enzyme catalyses octanoyl-[ACP] + L-lysyl-[protein] = N(6)-octanoyl-L-lysyl-[protein] + holo-[ACP] + H(+). It functions in the pathway protein modification; protein lipoylation via endogenous pathway; protein N(6)-(lipoyl)lysine from octanoyl-[acyl-carrier-protein]: step 1/2. Functionally, catalyzes the transfer of endogenously produced octanoic acid from octanoyl-acyl-carrier-protein onto the lipoyl domains of lipoate-dependent enzymes. Lipoyl-ACP can also act as a substrate although octanoyl-ACP is likely to be the physiological substrate. The sequence is that of Octanoyltransferase from Prochlorococcus marinus (strain MIT 9515).